The sequence spans 844 residues: Aminopeptidase N (844 aa).

Residues glutamate 120 and 253–257 (GAMEN) each bind substrate. Histidine 289 is a binding site for Zn(2+). The active-site Proton acceptor is glutamate 290. Zn(2+) contacts are provided by histidine 293 and glutamate 312.

Belongs to the peptidase M1 family. Monomer. It depends on Zn(2+) as a cofactor.

It localises to the cytoplasm. The catalysed reaction is Release of an N-terminal amino acid, Xaa-|-Yaa- from a peptide, amide or arylamide. Xaa is preferably Ala, but may be most amino acids including Pro (slow action). When a terminal hydrophobic residue is followed by a prolyl residue, the two may be released as an intact Xaa-Pro dipeptide.. In terms of biological role, aminopeptidase N is involved in the degradation of intracellular peptides generated by protein breakdown during normal growth as well as in response to nutrient starvation. The chain is Aminopeptidase N (pepN) from Lactobacillus helveticus (Lactobacillus suntoryeus).